A 537-amino-acid polypeptide reads, in one-letter code: Leucine-rich repeat LGI family member 4 (537 aa).

An N-terminal signal peptide occupies residues 1–19 (MGGAGILLLLLAGAGVVVA). LRR repeat units follow at residues 53-74 (TLLS…SFLR), 77-98 (SLHL…AFAG), 101-122 (HLQY…ALRG), and 125-146 (SLTH…LFRG). The region spanning 158-208 (NPFQCDCRVLWLLQWMPTVNASVGTGACAGPASLSHMQLHHLDPKTFKCRA) is the LRRCT domain. Asn-177 carries N-linked (GlcNAc...) asparagine glycosylation. 7 EAR repeats span residues 210–252 (ELSW…SWDY), 256–298 (RFRP…ARPS), 302–349 (RLAP…CRDG), 351–394 (GFYP…HWTG), 396–439 (RFER…RWDG), 441–483 (MFRL…RLEP), and 487–532 (LLEP…QHHE).

As to quaternary structure, can bind to ADAM11, ADAM22 and ADAM23. Widely expressed, with highest expression in brain.

The protein resides in the secreted. Component of Schwann cell signaling pathway(s) that controls axon segregation and myelin formation. The sequence is that of Leucine-rich repeat LGI family member 4 (LGI4) from Homo sapiens (Human).